The primary structure comprises 340 residues: uncharacterized protein (340 aa).

Positions 1-20 (MGGARRLKLDGSIPNQLARA) are cleaved as a signal peptide.

This is an uncharacterized protein from Mycobacterium tuberculosis (strain CDC 1551 / Oshkosh).